The chain runs to 465 residues: UDP-N-acetylmuramate--L-alanine ligase (465 aa).

112-118 (GTHGKTT) serves as a coordination point for ATP.

It belongs to the MurCDEF family.

The protein localises to the cytoplasm. The catalysed reaction is UDP-N-acetyl-alpha-D-muramate + L-alanine + ATP = UDP-N-acetyl-alpha-D-muramoyl-L-alanine + ADP + phosphate + H(+). Its pathway is cell wall biogenesis; peptidoglycan biosynthesis. Its function is as follows. Cell wall formation. This is UDP-N-acetylmuramate--L-alanine ligase from Janthinobacterium sp. (strain Marseille) (Minibacterium massiliensis).